A 224-amino-acid polypeptide reads, in one-letter code: Myogenin (224 aa).

Residues serine 77 and serine 79 each carry the phosphoserine; by CaMK2G modification. Positions 81-132 (DRRRAATLREKRRLKKVNEAFEALKRSTLLNPNQRLPKVEILRSAIQYIERL) constitute a bHLH domain. The residue at position 87 (threonine 87) is a Phosphothreonine; by CaMK2G.

Homodimer and heterodimer with E12; heterodimerization enhances MYOG DNA-binding and transcriptional activities. Interacts with SMARCA4/BRG1/BAF190A. Interacts (via C-terminal region) with SSRP1 and SUPT16H; the interaction is indicative of an interaction with the FACT complex. nteracts with CSRP3. Phosphorylated by CAMK2G on threonine and serine amino acids in a muscle activity-dependent manner. Phosphorylation of Thr-87 impairs both DNA-binding and trans-activation functions in contracting muscles. In terms of tissue distribution, expressed in myoblast cells. Expressed weakly in myotubes (at protein level). Expressed strongly in denervated muscles and in satellite cells isolated from denervated muscles. Expressed weakly in innervated muscle and in satellite cells isolated from innervated muscles.

The protein resides in the nucleus. Its function is as follows. Acts as a transcriptional activator that promotes transcription of muscle-specific target genes and plays a role in muscle differentiation, cell cycle exit and muscle atrophy. Essential for the development of functional embryonic skeletal fiber muscle differentiation. However is dispensable for postnatal skeletal muscle growth; phosphorylation by CAMK2G inhibits its transcriptional activity in respons to muscle activity. Required for the recruitment of the FACT complex to muscle-specific promoter regions, thus promoting gene expression initiation. During terminal myoblast differentiation, plays a role as a strong activator of transcription at loci with an open chromatin structure previously initiated by MYOD1. Together with MYF5 and MYOD1, co-occupies muscle-specific gene promoter core regions during myogenesis. Also cooperates with myocyte-specific enhancer factor MEF2D and BRG1-dependent recruitment of SWI/SNF chromatin-remodeling enzymes to alter chromatin structure at myogenic late gene promoters. Facilitates cell cycle exit during terminal muscle differentiation through the up-regulation of miR-20a expression, which in turn represses genes involved in cell cycle progression. Binds to the E-box containing (E1) promoter region of the miR-20a gene. Also plays a role in preventing reversal of muscle cell differentiation. Contributes to the atrophy-related gene expression in adult denervated muscles. Induces fibroblasts to differentiate into myoblasts. The chain is Myogenin (Myog) from Mus musculus (Mouse).